The primary structure comprises 182 residues: uncharacterized protein (182 aa).

Residues 55–182 (VNLHDLEKLC…GVKGMFWYPL (128 aa)) enclose the N-acetyltransferase domain.

The protein belongs to the acetyltransferase family. Ycf52 subfamily.

The protein resides in the plastid. It localises to the chloroplast. This is an uncharacterized protein from Gracilaria tenuistipitata var. liui (Red alga).